We begin with the raw amino-acid sequence, 631 residues long: MPEISLRHVVSCSSQDSTHCAENLLKADTYRKWRAAKAGEKTISVVLQLEKEEQIHSVDIGNDGSAFVEVLVGSSAGGATAGEQDYEVLLVTSSFMSPSESRSGSNPNRVRIFGPDKLVRAAAEKRWDRVKIVCSQPYSKDSPYGLSFVKFHSPPDKDEAEATSQKVTVTKLGQFRVKEEDDSANSLKPGALFFSRINKTSSASTSDPAGPSYAAATLQASSAASSASPVPKVVGSSSKPQEPPKGKRKLDLSLEDRKPPSKPSAGPSTLKRPKLSVPSRTPAAAPASTPAQRAVPGKPRGEGTEPRGARTGPQELGKILQGVVVVLSGFQNPFRSELRDKALELGAKYRPDWTPDSTHLICAFANTPKYSQVLGLGGRIVRKEWVLDCHHMRRRLPSRRYLMAGLGSSSEDEGDSHSESGEDEAPKLPQKRPQPKAKTQAAGPSSPPRPPTPKETKAPSPGPQDNSDTEGEESEGRDNGAEDSGDTEDELRRVAKQREQRQPPAPEENGEDPYAGSTDENTDSETPSEADLPIPELPDFFEGKHFFLYGEFPGDERRRLIRYVTAFNGELEDYMNERVQFVITAQEWDPNFEEALMENPSLAFVRPRWIYSCNEKQKLLPHQLYGVVPQA.

A Phosphoserine modification is found at Ser-142. Lys-178 is covalently cross-linked (Glycyl lysine isopeptide (Lys-Gly) (interchain with G-Cter in SUMO1); alternate). Lys-178 is covalently cross-linked (Glycyl lysine isopeptide (Lys-Gly) (interchain with G-Cter in SUMO2); alternate). Thr-200 carries the phosphothreonine modification. Ser-201, Ser-206, and Ser-228 each carry phosphoserine. Residues 225 to 238 are compositionally biased toward low complexity; the sequence is SSASPVPKVVGSSS. The segment at 225 to 315 is disordered; the sequence is SSASPVPKVV…PRGARTGPQE (91 aa). A compositionally biased stretch (basic and acidic residues) spans 242–259; that stretch reads EPPKGKRKLDLSLEDRKP. Ser-261 carries the phosphoserine modification. A compositionally biased stretch (low complexity) spans 278 to 294; it reads PSRTPAAAPASTPAQRA. At Thr-281 the chain carries Phosphothreonine. Residues 299–308 are compositionally biased toward basic and acidic residues; that stretch reads PRGEGTEPRG. The region spanning 315-403 is the BRCT 1 domain; it reads ELGKILQGVV…RRLPSRRYLM (89 aa). Ser-371, Ser-408, Ser-409, and Ser-410 each carry phosphoserine. Residues 405 to 537 are disordered; the sequence is GLGSSSEDEG…SEADLPIPEL (133 aa). The segment covering 415–426 has biased composition (basic and acidic residues); the sequence is DSHSESGEDEAP. Residues Ser-445 and Ser-446 each carry the phosphoserine modification. Thr-452 and Thr-456 each carry phosphothreonine. Phosphoserine occurs at positions 460 and 484. At Thr-487 the chain carries Phosphothreonine. Residues 490 to 501 are compositionally biased toward basic and acidic residues; that stretch reads ELRRVAKQREQR. Position 517 is a phosphoserine (Ser-517). Phosphothreonine is present on residues Thr-518 and Thr-522. The BRCT 2 domain occupies 536-627; it reads ELPDFFEGKH…KLLPHQLYGV (92 aa).

Homodimer. Interacts with polynucleotide kinase (PNK), DNA polymerase-beta (POLB) and DNA ligase III (LIG3). Interacts with APTX and APLF. Interacts with APEX1; the interaction is induced by SIRT1 and increases with the acetylated form of APEX1. Interacts with (poly-ADP-ribosylated) PARP1. In terms of processing, phosphorylation of Ser-371 causes dimer dissociation. Phosphorylation by CK2 promotes interaction with APTX and APLF. Post-translationally, sumoylated.

The protein resides in the nucleus. Its subcellular location is the chromosome. Functionally, scaffold protein involved in DNA single-strand break repair by mediating the assembly of DNA break repair protein complexes. Negatively regulates ADP-ribosyltransferase activity of PARP1 during base-excision repair in order to prevent excessive PARP1 activity. Recognizes and binds poly-ADP-ribose chains: specifically binds auto-poly-ADP-ribosylated PARP1, limiting its activity. The polypeptide is DNA repair protein XRCC1 (Xrcc1) (Mus musculus (Mouse)).